A 637-amino-acid chain; its full sequence is Proton myo-inositol cotransporter (637 aa).

Over 1-65 (MSRKASEDVE…AARRQFQRDE (65 aa)) the chain is Cytoplasmic. Serine 6 is modified (phosphoserine). The tract at residues 16 to 38 (LSSLMGERRRRQPEPGAPGGERS) is disordered. Serine 44 and serine 47 each carry phosphoserine. Residues 66-86 (TPAFVYAAAAFSALGGFLFGY) traverse the membrane as a helical segment. The Extracellular portion of the chain corresponds to 87-114 (DTGVVSGAMLLLRRQMRLGAMWQELLVS). The helical transmembrane segment at 115 to 135 (GAVGAAAVAALAGGALNGALG) threads the bilayer. Over 136–137 (RR) the chain is Cytoplasmic. A helical membrane pass occupies residues 138–158 (SAILLASALCTVGSAVLAAAA). The Extracellular portion of the chain corresponds to 159–167 (NKETLLAGR). The helical transmembrane segment at 168–188 (LVVGLGIGIASMTVPVYIAEV) threads the bilayer. Residues 189-201 (SPPNLRGRLVTIN) lie on the Cytoplasmic side of the membrane. The helical transmembrane segment at 202 to 222 (TLFITGGQFFASVVDGAFSYL) threads the bilayer. The Extracellular portion of the chain corresponds to 223 to 228 (QKDGWR). A helical membrane pass occupies residues 229–249 (YMLGLAAIPAVIQFLGFLFLP). Topologically, residues 250–313 (ESPRWLIQKG…RMLSYPPTRR (64 aa)) are cytoplasmic. A helical transmembrane segment spans residues 314 to 334 (ALAVGCGLQMFQQLSGINTIM). Residues 335–352 (YYSATILQMSGVEDDRLA) are Extracellular-facing. Residues 353 to 373 (IWLASITAFTNFIFTLVGVWL) traverse the membrane as a helical segment. The Cytoplasmic segment spans residues 374 to 382 (VEKVGRRKL). A helical membrane pass occupies residues 383–403 (TFGSLAGTTVALTILALGFLL). At 404–497 (SAQVSPRVTF…SFCPTPYSWT (94 aa)) the chain is on the extracellular side. Residues asparagine 422, asparagine 447, and asparagine 474 are each glycosylated (N-linked (GlcNAc...) asparagine). Residues 498 to 518 (ALVGLVLYLVFFAPGMGPMPW) traverse the membrane as a helical segment. The Cytoplasmic portion of the chain corresponds to 519 to 538 (TVNSEIYPLWARSTGNACSA). Residues 539–559 (GINWIFNVLVSLTFLHTAEYL) form a helical membrane-spanning segment. Topologically, residues 560 to 562 (TYY) are extracellular. The chain crosses the membrane as a helical span at residues 563–583 (GAFFLYAGFAAVGLLFVYGCL). Over 584 to 637 (PETKGKKLEEIESLFDHRLCTCGTADSDEGRYIEYIRVKGSNYHLSDNDASDVE) the chain is Cytoplasmic. Phosphoserine occurs at positions 629 and 634.

Belongs to the major facilitator superfamily. Sugar transporter (TC 2.A.1.1) family.

It localises to the cell membrane. It catalyses the reaction myo-inositol(out) + H(+)(out) = myo-inositol(in) + H(+)(in). H(+)-myo-inositol cotransporter. Can also transport related stereoisomers. The sequence is that of Proton myo-inositol cotransporter from Rattus norvegicus (Rat).